The following is a 333-amino-acid chain: Low specificity L-threonine aldolase (333 aa).

K197 carries the post-translational modification N6-(pyridoxal phosphate)lysine.

It belongs to the threonine aldolase family. Homotetramer. It depends on pyridoxal 5'-phosphate as a cofactor.

It catalyses the reaction L-threonine = acetaldehyde + glycine. The enzyme catalyses L-allo-threonine = acetaldehyde + glycine. Functionally, catalyzes the cleavage of L-allo-threonine and L-threonine to glycine and acetaldehyde. L-threo-phenylserine and L-erythro-phenylserine are also good substrates. This is Low specificity L-threonine aldolase (ltaE) from Escherichia coli O157:H7.